A 157-amino-acid polypeptide reads, in one-letter code: 2-C-methyl-D-erythritol 2,4-cyclodiphosphate synthase (157 aa).

D8 and H10 together coordinate a divalent metal cation. 4-CDP-2-C-methyl-D-erythritol 2-phosphate contacts are provided by residues 8-10 and 34-35; these read DVH and HS. H42 provides a ligand contact to a divalent metal cation. 4-CDP-2-C-methyl-D-erythritol 2-phosphate-binding positions include 56–58, 61–65, 100–106, 132–135, F139, and R142; these read DIG, FPDTD, AQAPKMA, and TTTE.

Belongs to the IspF family. In terms of assembly, homotrimer. The cofactor is a divalent metal cation.

The catalysed reaction is 4-CDP-2-C-methyl-D-erythritol 2-phosphate = 2-C-methyl-D-erythritol 2,4-cyclic diphosphate + CMP. It functions in the pathway isoprenoid biosynthesis; isopentenyl diphosphate biosynthesis via DXP pathway; isopentenyl diphosphate from 1-deoxy-D-xylulose 5-phosphate: step 4/6. Involved in the biosynthesis of isopentenyl diphosphate (IPP) and dimethylallyl diphosphate (DMAPP), two major building blocks of isoprenoid compounds. Catalyzes the conversion of 4-diphosphocytidyl-2-C-methyl-D-erythritol 2-phosphate (CDP-ME2P) to 2-C-methyl-D-erythritol 2,4-cyclodiphosphate (ME-CPP) with a corresponding release of cytidine 5-monophosphate (CMP). The chain is 2-C-methyl-D-erythritol 2,4-cyclodiphosphate synthase from Pseudomonas aeruginosa (strain ATCC 15692 / DSM 22644 / CIP 104116 / JCM 14847 / LMG 12228 / 1C / PRS 101 / PAO1).